Reading from the N-terminus, the 357-residue chain is Aurora kinase A- and ninein-interacting protein (357 aa).

The segment covering 72-93 has biased composition (polar residues); that stretch reads TSQQGKTNGADQRSVSSHTESQ. The segment at 72-102 is disordered; it reads TSQQGKTNGADQRSVSSHTESQTNKESKEDA. The tract at residues 189 to 357 is interaction with AURKA; sequence QKEGEDSSCE…EGNQVIRHQA (169 aa). The interaction with RBBP8/CtIP stretch occupies residues 281-357; the sequence is KDSWSQLFTE…EGNQVIRHQA (77 aa). At Ser292 the chain carries Phosphoserine.

Belongs to the AUNIP family. In terms of assembly, interacts (via C-terminus) with AURKA (via C-terminus). Interacts (via N-terminus) with NIN; this interaction blocks NIN phosphorylation by both AURKA and GSK3B. Identified in a complex with NIN and AURKA. Interacts with RBBP8/CtIP.

Its subcellular location is the nucleus. It is found in the chromosome. The protein resides in the cytoplasm. The protein localises to the cytoskeleton. It localises to the microtubule organizing center. Its subcellular location is the centrosome. It is found in the spindle pole. DNA-binding protein that accumulates at DNA double-strand breaks (DSBs) following DNA damage and promotes DNA resection and homologous recombination. Serves as a sensor of DNA damage: binds DNA with a strong preference for DNA substrates that mimic structures generated at stalled replication forks, and anchors RBBP8/CtIP to DSB sites to promote DNA end resection and ensuing homologous recombination repair. Inhibits non-homologous end joining (NHEJ). Required for the dynamic movement of AURKA at the centrosomes and spindle apparatus during the cell cycle. The sequence is that of Aurora kinase A- and ninein-interacting protein from Bos taurus (Bovine).